A 132-amino-acid polypeptide reads, in one-letter code: uncharacterized protein (132 aa).

A run of 4 helical transmembrane segments spans residues 6 to 26 (WIYAVFTILIIGLGLGSRAFS), 34 to 54 (NTYLGDSLWAAMIFTGCGFLF), 59 to 79 (TMITGIISLSFCFVIEFSQLY), and 106 to 126 (IEAYTIGIAACAAIELLVLGI).

The protein localises to the cell membrane. This is an uncharacterized protein from Bacillus subtilis (strain 168).